Consider the following 249-residue polypeptide: Exosome complex component Rrp4 (249 aa).

An S1 motif domain is found at 72 to 143 (GDTIIGLVED…RTISPVLTVK (72 aa)). In terms of domain architecture, KH spans 151 to 213 (PLGTVMDIMP…EALIEAINII (63 aa)).

It belongs to the RRP4 family. Component of the archaeal exosome complex. Forms a trimer of Rrp4 and/or Csl4 subunits. The trimer associates with a hexameric ring-like arrangement composed of 3 Rrp41-Rrp42 heterodimers.

The protein localises to the cytoplasm. Functionally, non-catalytic component of the exosome, which is a complex involved in RNA degradation. Increases the RNA binding and the efficiency of RNA degradation. Confers strong poly(A) specificity to the exosome. This chain is Exosome complex component Rrp4, found in Sulfolobus acidocaldarius (strain ATCC 33909 / DSM 639 / JCM 8929 / NBRC 15157 / NCIMB 11770).